A 103-amino-acid chain; its full sequence is Stefin-2 (103 aa).

Residues 52–56 (QVVQG) carry the Secondary area of contact motif.

It belongs to the cystatin family.

It is found in the cytoplasm. In terms of biological role, this is an intracellular thiol proteinase inhibitor. This Mus musculus (Mouse) protein is Stefin-2 (Stfa2).